The chain runs to 465 residues: Alpha-2A adrenergic receptor (465 aa).

The Extracellular segment spans residues 1–48; sequence MFRQEQPLAEGSFAPMGSLQPDAGNSSWNGTEAPGGGTRATPYSLQVT. Residues asparagine 25 and asparagine 29 are each glycosylated (N-linked (GlcNAc...) asparagine). A helical membrane pass occupies residues 49–74; sequence LTLVCLAGLLMLFTVFGNVLVIIAVF. Topologically, residues 75–85 are cytoplasmic; sequence TSRALKAPQNL. A helical transmembrane segment spans residues 86-111; sequence FLVSLASADILVATLVIPFSLANEVM. Over 112–121 the chain is Extracellular; the sequence is GYWYFGKVWC. Cysteine 121 and cysteine 203 are joined by a disulfide. A helical membrane pass occupies residues 122–144; it reads EIYLALDVLFCTSSIVHLCAISL. The Cytoplasmic segment spans residues 145-164; the sequence is DRYWSITQAIEYNLKRTPRR. Residues 165–188 traverse the membrane as a helical segment; sequence IKAIIVTVWVISAVISFPPLISIE. Residues 189–207 lie on the Extracellular side of the membrane; it reads KKGAGGGQQPAEPSCKIND. Residues 208–232 form a helical membrane-spanning segment; the sequence is QKWYVISSSIGSFFAPCLIMILVYV. Residues 233–389 are Cytoplasmic-facing; sequence RIYQIAKRRT…RQNREKRFTF (157 aa). The disordered stretch occupies residues 242–378; it reads TRVPPSRRGP…GGGAKASRWR (137 aa). Residues 313 to 330 are compositionally biased toward basic and acidic residues; that stretch reads SSEHAERPPGPRRPDRGP. Serine 346 bears the Phosphoserine mark. Gly residues predominate over residues 353-363; that stretch reads GAAGPGASGSG. Arginine 368 is subject to Omega-N-methylarginine. The helical transmembrane segment at 390-414 threads the bilayer; the sequence is VLAVVIGVFVVCWFPFFFTYTLIAV. Over 415–424 the chain is Extracellular; it reads GCPVPSQLFN. The chain crosses the membrane as a helical span at residues 425–445; the sequence is FFFWFGYCNSSLNPVIYTIFN. Topologically, residues 446 to 465 are cytoplasmic; that stretch reads HDFRRAFKKILCRGDRKRIV. Residue cysteine 457 is the site of S-palmitoyl cysteine attachment.

It belongs to the G-protein coupled receptor 1 family. Adrenergic receptor subfamily. ADRA2A sub-subfamily.

Its subcellular location is the cell membrane. Functionally, alpha-2 adrenergic receptors mediate the catecholamine-induced inhibition of adenylate cyclase through the action of G proteins. The sequence is that of Alpha-2A adrenergic receptor from Mus musculus (Mouse).